A 73-amino-acid polypeptide reads, in one-letter code: Large ribosomal subunit protein bL31 (73 aa).

Belongs to the bacterial ribosomal protein bL31 family. Type A subfamily. In terms of assembly, part of the 50S ribosomal subunit.

In terms of biological role, binds the 23S rRNA. The sequence is that of Large ribosomal subunit protein bL31 from Rhizobium johnstonii (strain DSM 114642 / LMG 32736 / 3841) (Rhizobium leguminosarum bv. viciae).